The following is a 175-amino-acid chain: Sec-independent protein translocase protein TatB (175 aa).

The helical transmembrane segment at 1-21 (MLDLGLSKMALIGVVALVVLG) threads the bilayer. Residues 96 to 115 (VSPGGSAAADAPDGPSAASG) are compositionally biased toward low complexity. 2 disordered regions span residues 96 to 119 (VSPGGSAAADAPDGPSAASGEPSW) and 152 to 175 (QVQSGAARVARHRPASLRRPARFL). Residues 160-175 (VARHRPASLRRPARFL) show a composition bias toward basic residues.

It belongs to the TatB family. As to quaternary structure, the Tat system comprises two distinct complexes: a TatABC complex, containing multiple copies of TatA, TatB and TatC subunits, and a separate TatA complex, containing only TatA subunits. Substrates initially bind to the TatABC complex, which probably triggers association of the separate TatA complex to form the active translocon.

It localises to the cell inner membrane. Functionally, part of the twin-arginine translocation (Tat) system that transports large folded proteins containing a characteristic twin-arginine motif in their signal peptide across membranes. Together with TatC, TatB is part of a receptor directly interacting with Tat signal peptides. TatB may form an oligomeric binding site that transiently accommodates folded Tat precursor proteins before their translocation. This chain is Sec-independent protein translocase protein TatB, found in Burkholderia pseudomallei (strain 1710b).